Consider the following 577-residue polypeptide: Urease subunit alpha (577 aa).

The 442-residue stretch at 136-577 (GAIDCHVHLI…LPMAQRYFLF (442 aa)) folds into the Urease domain. Ni(2+) contacts are provided by H141, H143, and K224. K224 carries the N6-carboxylysine modification. Position 226 (H226) interacts with substrate. 2 residues coordinate Ni(2+): H253 and H279. The active-site Proton donor is the H327. Position 367 (D367) interacts with Ni(2+).

It belongs to the metallo-dependent hydrolases superfamily. Urease alpha subunit family. In terms of assembly, heterotrimer of UreA (gamma), UreB (beta) and UreC (alpha) subunits. Three heterotrimers associate to form the active enzyme. Ni cation is required as a cofactor. Carboxylation allows a single lysine to coordinate two nickel ions.

It is found in the cytoplasm. The enzyme catalyses urea + 2 H2O + H(+) = hydrogencarbonate + 2 NH4(+). It participates in nitrogen metabolism; urea degradation; CO(2) and NH(3) from urea (urease route): step 1/1. In Mycobacterium ulcerans (strain Agy99), this protein is Urease subunit alpha.